The following is a 204-amino-acid chain: Protease (204 aa).

Catalysis depends on residues His-54, Asp-71, and Cys-122.

This sequence belongs to the peptidase C5 family. Interacts with protease cofactor pVI-C; this interaction is necessary for protease activation.

The protein localises to the virion. Its subcellular location is the host nucleus. It catalyses the reaction Cleaves proteins of the adenovirus and its host cell at two consensus sites: -Yaa-Xaa-Gly-Gly-|-Xaa- and -Yaa-Xaa-Gly-Xaa-|-Gly- (in which Yaa is Met, Ile or Leu, and Xaa is any amino acid).. With respect to regulation, requires DNA and protease cofactor for maximal activation. Inside nascent virions, becomes partially activated by binding to the viral DNA, allowing it to cleave the cofactor that binds to the protease and fully activates it. Actin, like the viral protease cofactor, seems to act as a cofactor in the cleavage of cytokeratin 18 and of actin itself. Cleaves viral precursor proteins (pTP, pIIIa, pVI, pVII, pVIII, and pX) inside newly assembled particles giving rise to mature virions. Protease complexed to its cofactor slides along the viral DNA to specifically locate and cleave the viral precursors. Mature virions have a weakened organization compared to the unmature virions, thereby facilitating subsequent uncoating. Without maturation, the particle lacks infectivity and is unable to uncoat. Late in adenovirus infection, in the cytoplasm, may participate in the cytoskeleton destruction. Cleaves host cell cytoskeletal keratins K7 and K18. This is Protease from Bos taurus (Bovine).